A 310-amino-acid polypeptide reads, in one-letter code: Alpha/beta hydrolase domain-containing protein 17A (310 aa).

Positions 38–61 (VPEPEPGPGGAGAAPSGPLRTSAA) are disordered. Active-site charge relay system residues include Ser-190, Asp-255, and His-284. At Ser-307 the chain carries Phosphoserine.

It belongs to the AB hydrolase superfamily. ABHD17 family. In terms of processing, palmitoylated on cysteine residues located in a cysteine cluster at the N-terminus which promotes membrane localization. Palmitoylation is required for post-synaptic localization and for depalmitoylating activity towards DLG4/PSD95. As to expression, expressed in brain (at protein level). Expressed in hippocampal neurons.

Its subcellular location is the cell membrane. It is found in the recycling endosome membrane. The protein localises to the cell projection. The protein resides in the dendritic spine. It localises to the postsynaptic density membrane. It catalyses the reaction S-hexadecanoyl-L-cysteinyl-[protein] + H2O = L-cysteinyl-[protein] + hexadecanoate + H(+). In terms of biological role, hydrolyzes fatty acids from S-acylated cysteine residues in proteins. Has depalmitoylating activity towards NRAS. Has depalmitoylating activity towards DLG4/PSD95. May have depalmitoylating activity towards MAP6. In Rattus norvegicus (Rat), this protein is Alpha/beta hydrolase domain-containing protein 17A.